The chain runs to 1036 residues: ADAMTS-like protein 4 (1036 aa).

The first 24 residues, 1–24, serve as a signal peptide directing secretion; that stretch reads MESWLGRLWLCMMLLLPLPQPCQD. In terms of domain architecture, TSP type-1 1 spans 47 to 91; sequence GPWGRWASCSQPCGVGVQRRSRTCELHPALPLPPRPPRHPEAHRP. 2 disordered regions span residues 73-149 and 163-308; these read HPAL…IKPG and HRSR…WLPL. Positions 163–173 are enriched in basic residues; sequence HRSRRHPHRPG. Positions 215-253 are enriched in polar residues; that stretch reads TPRSGTAQTEVLPRTSSAPSYTGTPAPTSSFGDSRSFQG. N-linked (GlcNAc...) asparagine glycans are attached at residues Asn-454 and Asn-737. TSP type-1 domains follow at residues 687–748, 750–804, 805–871, 872–931, and 932–988; these read CPPY…HLCG, WEIS…DMGP, CTTA…GPCE, RTWR…QGQA, and CEDK…QPCN. The region spanning 991 to 1028 is the PLAC domain; sequence PDDQCKDSSPHCPLVVQARLCVYPYYTTTCCRSCAHVL.

Interacts with CTSB. Interacts with FBN1. Post-translationally, glycosylated. Can be O-fucosylated by POFUT2 on a serine or a threonine residue found within the consensus sequence C1-X(2)-(S/T)-C2-G of the TSP type-1 repeat domains where C1 and C2 are the first and second cysteine residue of the repeat, respectively. Fucosylated repeats can then be further glycosylated by the addition of a beta-1,3-glucose residue by the glucosyltransferase, B3GALTL. Fucosylation mediates the efficient secretion of ADAMTS family members. Can also be C-glycosylated with one or two mannose molecules on tryptophan residues within the consensus sequence W-X-X-W of the TPRs, and N-glycosylated. These other glycosylations can also facilitate secretion. As to expression, widely expressed in a range of tissues. Especially prevalent in brain, spinal cord, muscle, lung and heart.

Its subcellular location is the secreted. The protein localises to the extracellular space. It localises to the extracellular matrix. Positive regulation of apoptosis. May facilitate FBN1 microfibril biogenesis. This is ADAMTS-like protein 4 from Mus musculus (Mouse).